Consider the following 209-residue polypeptide: Large ribosomal subunit protein uL3 (209 aa).

Residues 133 to 152 form a disordered region; the sequence is THGNSLSHRVPGSIGQNQTP. Gln-150 is subject to N5-methylglutamine.

It belongs to the universal ribosomal protein uL3 family. Part of the 50S ribosomal subunit. Forms a cluster with proteins L14 and L19. In terms of processing, methylated by PrmB.

Functionally, one of the primary rRNA binding proteins, it binds directly near the 3'-end of the 23S rRNA, where it nucleates assembly of the 50S subunit. The polypeptide is Large ribosomal subunit protein uL3 (Yersinia pseudotuberculosis serotype O:1b (strain IP 31758)).